Here is a 351-residue protein sequence, read N- to C-terminus: tRNA-specific 2-thiouridylase MnmA 2 (351 aa).

Residues 13 to 20 (GMSGGTDS) and phenylalanine 39 contribute to the ATP site. Cysteine 98 functions as the Nucleophile in the catalytic mechanism. A disulfide bridge connects residues cysteine 98 and cysteine 195. An ATP-binding site is contributed by glycine 122. The interval 144-146 (KDQ) is interaction with tRNA. Cysteine 195 acts as the Cysteine persulfide intermediate in catalysis. The interval 301–302 (RY) is interaction with tRNA.

Belongs to the MnmA/TRMU family.

Its subcellular location is the cytoplasm. The catalysed reaction is S-sulfanyl-L-cysteinyl-[protein] + uridine(34) in tRNA + AH2 + ATP = 2-thiouridine(34) in tRNA + L-cysteinyl-[protein] + A + AMP + diphosphate + H(+). Its function is as follows. Catalyzes the 2-thiolation of uridine at the wobble position (U34) of tRNA, leading to the formation of s(2)U34. The polypeptide is tRNA-specific 2-thiouridylase MnmA 2 (Phocaeicola vulgatus (strain ATCC 8482 / DSM 1447 / JCM 5826 / CCUG 4940 / NBRC 14291 / NCTC 11154) (Bacteroides vulgatus)).